A 238-amino-acid polypeptide reads, in one-letter code: Enolase-phosphatase E1 (238 aa).

Belongs to the HAD-like hydrolase superfamily. MasA/MtnC family. In terms of assembly, monomer. The cofactor is Mg(2+).

It carries out the reaction 5-methylsulfanyl-2,3-dioxopentyl phosphate + H2O = 1,2-dihydroxy-5-(methylsulfanyl)pent-1-en-3-one + phosphate. It functions in the pathway amino-acid biosynthesis; L-methionine biosynthesis via salvage pathway; L-methionine from S-methyl-5-thio-alpha-D-ribose 1-phosphate: step 3/6. The protein operates within amino-acid biosynthesis; L-methionine biosynthesis via salvage pathway; L-methionine from S-methyl-5-thio-alpha-D-ribose 1-phosphate: step 4/6. Bifunctional enzyme that catalyzes the enolization of 2,3-diketo-5-methylthiopentyl-1-phosphate (DK-MTP-1-P) into the intermediate 2-hydroxy-3-keto-5-methylthiopentenyl-1-phosphate (HK-MTPenyl-1-P), which is then dephosphorylated to form the acireductone 1,2-dihydroxy-3-keto-5-methylthiopentene (DHK-MTPene). In Synechococcus elongatus (strain ATCC 33912 / PCC 7942 / FACHB-805) (Anacystis nidulans R2), this protein is Enolase-phosphatase E1.